The chain runs to 786 residues: Mitochondrial intermediate peptidase (786 aa).

The transit peptide at 1 to 29 directs the protein to the mitochondrion; the sequence is MSSILLRSYRHHAKVWTRPSSKSSFIRSL. H567 serves as a coordination point for Zn(2+). E568 is an active-site residue. Zn(2+)-binding residues include H571 and H574.

Belongs to the peptidase M3 family. The cofactor is Zn(2+).

It localises to the mitochondrion matrix. It catalyses the reaction Release of an N-terminal octapeptide as second stage of processing of some proteins imported into the mitochondrion.. Its function is as follows. Cleaves proteins, imported into the mitochondrion, to their mature size. While most mitochondrial precursor proteins are processed to the mature form in one step by mitochondrial processing peptidase (MPP), the sequential cleavage by MIP of an octapeptide after initial processing by MPP is a required step for a subgroup of nuclear-encoded precursor proteins destined for the matrix or the inner membrane. This is Mitochondrial intermediate peptidase (OCT1) from Meyerozyma guilliermondii (strain ATCC 6260 / CBS 566 / DSM 6381 / JCM 1539 / NBRC 10279 / NRRL Y-324) (Yeast).